A 433-amino-acid polypeptide reads, in one-letter code: Adenylosuccinate synthetase (433 aa).

GTP is bound by residues 13–19 and 41–43; these read GDEGKGK and GHT. Residue aspartate 14 is the Proton acceptor of the active site. The Mg(2+) site is built by aspartate 14 and glycine 41. Residues 14–17, 39–42, threonine 130, arginine 144, glutamine 225, threonine 240, and arginine 304 contribute to the IMP site; these read DEGK and NAGH. The active-site Proton donor is the histidine 42. Substrate is bound at residue 300–306; that stretch reads STTGRKR. GTP contacts are provided by residues arginine 306, 332–334, and 414–416; these read KLD and STG.

Belongs to the adenylosuccinate synthetase family. As to quaternary structure, homodimer. It depends on Mg(2+) as a cofactor.

It localises to the cytoplasm. The enzyme catalyses IMP + L-aspartate + GTP = N(6)-(1,2-dicarboxyethyl)-AMP + GDP + phosphate + 2 H(+). It participates in purine metabolism; AMP biosynthesis via de novo pathway; AMP from IMP: step 1/2. Its function is as follows. Plays an important role in the de novo pathway of purine nucleotide biosynthesis. Catalyzes the first committed step in the biosynthesis of AMP from IMP. This chain is Adenylosuccinate synthetase, found in Buchnera aphidicola subsp. Acyrthosiphon pisum (strain Tuc7).